The sequence spans 1173 residues: Pleckstrin homology domain-containing family A member 6 (1173 aa).

Polar residues predominate over residues 1–22 (MSNKTGGKRSATINSDIANHNM). Residues 1–39 (MSNKTGGKRSATINSDIANHNMVSEVPPERPNIRATRTS) are disordered. The region spanning 59 to 158 (PVTKAGWLYK…WIQAMGEAAR (100 aa)) is the PH domain. Residues 163 to 346 (PAQKSVPQPV…PSRFYPMPRR (184 aa)) are disordered. Over residues 201-233 (LEPEAKTRGEGDGRGCEKAERRPERPEVKKETL) the composition is skewed to basic and acidic residues. A phosphoserine mark is found at S247 and S251. 2 stretches are compositionally biased toward polar residues: residues 270 to 281 (NGWQYSSPSRPG) and 311 to 322 (RKSSMNQLQQWV). 4 positions are modified to phosphoserine: S314, S459, S461, and S472. Y492 carries the phosphotyrosine modification. S665 bears the Phosphoserine mark. Disordered regions lie at residues 737-872 (RKNN…PRDI) and 888-984 (ALNK…RPAY). 2 stretches are compositionally biased toward low complexity: residues 761 to 782 (SSNSPASPLSSASLTSPLSPFS) and 789 to 799 (GSPTKPGSSEE). Positions 815–824 (ESPPTVPPLP) are enriched in pro residues. Position 864 is a phosphoserine (S864). Position 868 is a phosphothreonine (T868). Position 901 is a phosphoserine (S901). Residue T908 is modified to Phosphothreonine. Over residues 915–926 (RTTNGLTNGLSS) the composition is skewed to polar residues. S925 is modified (phosphoserine). Basic and acidic residues predominate over residues 940–952 (GKVKMSVEEQMDR). Residues 953–967 (MRRHQSGSMKEKRRS) show a composition bias toward basic residues. 3 positions are modified to phosphoserine: S973, S979, and S992. Phosphothreonine is present on T1045. S1065 carries the phosphoserine modification. 2 disordered regions span residues 1093 to 1114 (PIGEGDSVDVPQDSESQLQEQE) and 1130 to 1173 (RGRM…TMRV). T1140 bears the Phosphothreonine mark. Residues 1141–1155 (PSPPTSPASPTPPVN) are compositionally biased toward pro residues. The residue at position 1142 (S1142) is a Phosphoserine. T1145 carries the phosphothreonine modification. Residues S1146 and S1149 each carry the phosphoserine modification. T1151 is subject to Phosphothreonine.

This chain is Pleckstrin homology domain-containing family A member 6 (Plekha6), found in Mus musculus (Mouse).